The primary structure comprises 325 residues: Tyrosine phosphatase H2 (325 aa).

In terms of domain architecture, Tyrosine-protein phosphatase spans Val-27 to Tyr-295. Catalysis depends on Cys-236, which acts as the Phosphocysteine intermediate.

The protein belongs to the protein-tyrosine phosphatase family.

It localises to the host cytoplasm. The catalysed reaction is O-phospho-L-tyrosyl-[protein] + H2O = L-tyrosyl-[protein] + phosphate. Its function is as follows. Suppresses host immune cell adhesion and phagocytosis. Triggers host mitochondrial membrane depolarization and caspase-dependent apoptosis. The chain is Tyrosine phosphatase H2 (H2) from Microplitis demolitor bracovirus (isolate Webb) (MdBV).